The sequence spans 84 residues: Small ribosomal subunit protein uS17 (84 aa).

Belongs to the universal ribosomal protein uS17 family. In terms of assembly, part of the 30S ribosomal subunit.

Its function is as follows. One of the primary rRNA binding proteins, it binds specifically to the 5'-end of 16S ribosomal RNA. The sequence is that of Small ribosomal subunit protein uS17 from Borreliella afzelii (strain PKo) (Borrelia afzelii).